A 156-amino-acid chain; its full sequence is ATP synthase subunit b (156 aa).

Residues 7–29 form a helical membrane-spanning segment; sequence LLGQAISFGMFVWFCMKYVWPPI.

It belongs to the ATPase B chain family. As to quaternary structure, F-type ATPases have 2 components, F(1) - the catalytic core - and F(0) - the membrane proton channel. F(1) has five subunits: alpha(3), beta(3), gamma(1), delta(1), epsilon(1). F(0) has three main subunits: a(1), b(2) and c(10-14). The alpha and beta chains form an alternating ring which encloses part of the gamma chain. F(1) is attached to F(0) by a central stalk formed by the gamma and epsilon chains, while a peripheral stalk is formed by the delta and b chains.

Its subcellular location is the cell inner membrane. F(1)F(0) ATP synthase produces ATP from ADP in the presence of a proton or sodium gradient. F-type ATPases consist of two structural domains, F(1) containing the extramembraneous catalytic core and F(0) containing the membrane proton channel, linked together by a central stalk and a peripheral stalk. During catalysis, ATP synthesis in the catalytic domain of F(1) is coupled via a rotary mechanism of the central stalk subunits to proton translocation. Functionally, component of the F(0) channel, it forms part of the peripheral stalk, linking F(1) to F(0). This chain is ATP synthase subunit b, found in Vibrio cholerae serotype O1 (strain ATCC 39541 / Classical Ogawa 395 / O395).